The chain runs to 212 residues: Cytidylate kinase (212 aa).

7–15 contacts ATP; that stretch reads GPAASGKGT.

It belongs to the cytidylate kinase family. Type 1 subfamily.

The protein resides in the cytoplasm. It carries out the reaction CMP + ATP = CDP + ADP. The catalysed reaction is dCMP + ATP = dCDP + ADP. The chain is Cytidylate kinase from Rhodopseudomonas palustris (strain TIE-1).